The following is a 470-amino-acid chain: 6-phospho-beta-galactosidase 1 (470 aa).

Residues Gln-23, His-120, Asn-163, Glu-164, and Asn-300 each coordinate D-galactose 6-phosphate. The active-site Proton donor is Glu-164. The active-site Nucleophile is the Glu-378. The D-galactose 6-phosphate site is built by Ser-434, Trp-435, Lys-441, and Tyr-443.

It belongs to the glycosyl hydrolase 1 family.

It carries out the reaction a 6-phospho-beta-D-galactoside + H2O = D-galactose 6-phosphate + an alcohol. It functions in the pathway carbohydrate metabolism; lactose degradation; D-galactose 6-phosphate and beta-D-glucose from lactose 6-phosphate: step 1/1. The sequence is that of 6-phospho-beta-galactosidase 1 from Streptococcus pneumoniae serotype 4 (strain ATCC BAA-334 / TIGR4).